The sequence spans 386 residues: 2-isopropylmalate synthase (386 aa).

The Pyruvate carboxyltransferase domain occupies 12 to 265 (VRIFDTTLRD…EVNIKTYKLY (254 aa)). Positions 21, 203, 205, and 239 each coordinate a divalent metal cation.

It belongs to the alpha-IPM synthase/homocitrate synthase family. In terms of assembly, homodimer. The cofactor is a divalent metal cation.

The catalysed reaction is 3-methyl-2-oxobutanoate + acetyl-CoA + H2O = (2S)-2-isopropylmalate + CoA + H(+). The protein operates within amino-acid biosynthesis; L-leucine biosynthesis; L-leucine from 3-methyl-2-oxobutanoate: step 1/4. Catalyzes the condensation of the acetyl group of acetyl-CoA with 3-methyl-2-oxobutanoate (2-oxoisovalerate) to form 3-carboxy-3-hydroxy-4-methylpentanoate (2-isopropylmalate). Carries out the first step of the leucine biosynthesis pathway. In Sulfurisphaera tokodaii (strain DSM 16993 / JCM 10545 / NBRC 100140 / 7) (Sulfolobus tokodaii), this protein is 2-isopropylmalate synthase (leuA).